Reading from the N-terminus, the 654-residue chain is Endoplasmic reticulum chaperone BiP (654 aa).

Positions 1–18 are cleaved as a signal peptide; sequence MKFTVVAAALLLLCAVRA. A required for interaction with ELAPOR1 region spans residues 1–80; the sequence is MKFTVVAAAL…EGERLIGDAA (80 aa). ATP is bound at residue 36–39; sequence GTTY. The residue at position 86 (serine 86) is a Phosphoserine. Residue lysine 96 participates in ATP binding. At lysine 125 the chain carries N6-acetyllysine. The segment at 125-280 is nucleotide-binding (NBD); it reads KPYIQVDIGG…KKKTGKDVRK (156 aa). Position 160 is a 3'-nitrotyrosine (tyrosine 160). Lysine 213 carries the post-translational modification N6-acetyllysine. 227–229 is an ATP binding site; sequence GGT. Lysine 271 carries the N6-acetyllysine modification. 293 to 300 lines the ATP pocket; it reads EKAKRALS. Lysine 326 bears the N6-acetyllysine mark. Lysine 352 participates in a covalent cross-link: Glycyl lysine isopeptide (Lys-Gly) (interchain with G-Cter in SUMO2). Position 353 is an N6-acetyllysine; alternate (lysine 353). Lysine 353 is covalently cross-linked (Glycyl lysine isopeptide (Lys-Gly) (interchain with G-Cter in SUMO1); alternate). Residue 364-367 coordinates ATP; it reads GSTR. The interval 409 to 419 is interdomain linker; the sequence is QDTGDLVLLDV. Residues 420-500 are substrate-binding (SBD); the sequence is CPLTLGIETV…PRGVPQIEVT (81 aa). At lysine 447 the chain carries N6-succinyllysine. Position 492 is an omega-N-methylarginine (arginine 492). Threonine 518 carries the post-translational modification O-AMP-threonine; alternate. A Phosphothreonine; alternate modification is found at threonine 518. Lysine 585 is modified (N6,N6,N6-trimethyllysine; by METTL21A; in vitro). Lysine 585 is modified (N6,N6-dimethyllysine; alternate). Lysine 585 is subject to N6-methyllysine; alternate. Lysine 591 carries the N6-methyllysine modification. The segment at 631–654 is disordered; the sequence is ISKLYGSGGPPPTGEEDTSEKDEL. Phosphothreonine occurs at positions 643 and 648. The span at 644–654 shows a compositional bias: acidic residues; it reads GEEDTSEKDEL. Serine 649 carries the phosphoserine modification. The short motif at 651-654 is the Prevents secretion from ER element; the sequence is KDEL.

This sequence belongs to the heat shock protein 70 family. In terms of assembly, monomer and homooligomer; homooligomerization via the interdomain linker inactivates the chaperone activity and acts as a storage of HSPA5/BiP molecules. Interacts with DNAJC1 (via J domain). Component of an EIF2 complex at least composed of CELF1/CUGBP1, CALR, CALR3, EIF2S1, EIF2S2, HSP90B1 and HSPA5. Part of a large chaperone multiprotein complex comprising DNAJB11, HSP90B1, HSPA5, HYOU, PDIA2, PDIA4, PDIA6, PPIB, SDF2L1, UGGT1 and very small amounts of ERP29, but not, or at very low levels, CALR nor CANX. Interacts with TMEM132A and TRIM21. May form a complex with ERLEC1, OS9, SEL1L and SYVN1. Interacts with DNAJC10. Interacts with DNAJB9/ERdj4; leading to recruit HSPA5/BiP to ERN1/IRE1. Interacts with ERN1/IRE1 (via luminal domain); the interaction takes place following interaction with DNAJB9/ERdj4 and leads to inactivate ERN1/IRE1, the interaction also competitively inhibits ERN1 interaction with MANF. Interacts directly with MANF (via SAP domain); the interaction inhibits ATP binding to HSPA5/BiP and subsequent nucleotide exchange. Interacts with EIF2AK3/PERK (via luminal domain); interaction leads to inactivate EIF2AK3/PERK. Interacts with MX1. Interacts with METTL23. Interacts with CEMIP; the interaction induces calcium leakage from the endoplasmic reticulum and cell migration. Interacts with PCSK4 form; the interaction takes place in the endoplasmic reticulum. Interacts with CIPC. Interacts with CCDC88B (via C-terminus); the interaction opposes ERN1-mediated JNK activation, protecting against apoptosis. Interacts with INPP5K; necessary for INPP5K localization at the endoplasmic reticulum. Interacts with MANF; the interaction is direct. Interacts with LOXL2; leading to activate the ERN1/IRE1-XBP1 pathway of the unfolded protein response. Interacts with CLU under stressed condition; interaction increases CLU protein stability; facilitates its retrotranslocation and redistribution to the mitochondria; cooperatively suppress stress-induced apoptosis by stabilizing mitochondrial membrane integrity. Interacts with CCDC47. Interacts with CLN3. Interacts with ELAPOR1; may regulate the function of HSPA5 in apoptosis and cell proliferation. Interacts with CASP7. Interacts with ILDR2; the interaction stabilizes ILDR2 expression. Interacts with ADAM7. In unstressed cells, AMPylation at Thr-518 by FICD inactivates the chaperome activity: AMPylated form is locked in a relatively inert state and only weakly stimulated by J domain-containing proteins. In response to endoplasmic reticulum stress, de-AMPylation by the same protein, FICD, restores the chaperone activity.

The protein localises to the endoplasmic reticulum lumen. It is found in the melanosome. It localises to the cytoplasm. Its subcellular location is the cell surface. It carries out the reaction ATP + H2O = ADP + phosphate + H(+). The chaperone activity is regulated by ATP-induced allosteric coupling of the nucleotide-binding (NBD) and substrate-binding (SBD) domains. In the ADP-bound and nucleotide-free (apo) states, the two domains have little interaction. In contrast, in the ATP-bound state the two domains are tightly coupled, which results in drastically accelerated kinetics in both binding and release of polypeptide substrates. J domain-containing co-chaperones (DNAJB9/ERdj4 or DNAJC10/ERdj5) stimulate the ATPase activity and are required for efficient substrate recognition by HSPA5/BiP. Homooligomerization inactivates participating HSPA5/BiP protomers and probably act as reservoirs to store HSPA5/BiP molecules when they are not needed by the cell. In terms of biological role, endoplasmic reticulum chaperone that plays a key role in protein folding and quality control in the endoplasmic reticulum lumen. Involved in the correct folding of proteins and degradation of misfolded proteins via its interaction with DNAJC10/ERdj5, probably to facilitate the release of DNAJC10/ERdj5 from its substrate. Acts as a key repressor of the EIF2AK3/PERK and ERN1/IRE1-mediated unfolded protein response (UPR). In the unstressed endoplasmic reticulum, recruited by DNAJB9/ERdj4 to the luminal region of ERN1/IRE1, leading to disrupt the dimerization of ERN1/IRE1, thereby inactivating ERN1/IRE1. Also binds and inactivates EIF2AK3/PERK in unstressed cells. Accumulation of misfolded protein in the endoplasmic reticulum causes release of HSPA5/BiP from ERN1/IRE1 and EIF2AK3/PERK, allowing their homodimerization and subsequent activation. Plays an auxiliary role in post-translational transport of small presecretory proteins across endoplasmic reticulum (ER). May function as an allosteric modulator for SEC61 channel-forming translocon complex, likely cooperating with SEC62 to enable the productive insertion of these precursors into SEC61 channel. Appears to specifically regulate translocation of precursors having inhibitory residues in their mature region that weaken channel gating. May also play a role in apoptosis and cell proliferation. In Rattus norvegicus (Rat), this protein is Endoplasmic reticulum chaperone BiP.